A 360-amino-acid polypeptide reads, in one-letter code: MAKRIYNFNAGPAVLPLPVLEEMQREMLDFHGSGMSILEVSHRSKWFEDVLDEAIVRIKRLLKLDDTYQVLFLQGGASLQFCMVPMNLALPGKPVSYVETDMWSTKAIQEARIQGKEVEVAASSGDREFTYIPGQVKVRPDSAYLHITSNNTIRGTQWHSFPDTGNIPLVSDMSSDIFSRVFDPKPFGLIYAGAQKNAGPAGVTLVIVREDMLKRVPKELPTMLKYTTFSEKKSMFNTPPCFAIYTVSLVTKWLEETVGGIARMEEQNRRKGETLYRYLDSQDYYRGTAEPDSRSLMNVTFRLPDAALDKFVKEATAAGLGGLKGHRSVGGCRASLYNATPLEGVEALVDFMKEFVRKNG.

Arg-43 lines the L-glutamate pocket. Pyridoxal 5'-phosphate contacts are provided by residues 77–78, Trp-103, Thr-152, Asp-172, and Gln-195; that span reads AS. Position 196 is an N6-(pyridoxal phosphate)lysine (Lys-196). 237 to 238 serves as a coordination point for pyridoxal 5'-phosphate; it reads NT.

This sequence belongs to the class-V pyridoxal-phosphate-dependent aminotransferase family. SerC subfamily. As to quaternary structure, homodimer. It depends on pyridoxal 5'-phosphate as a cofactor.

It is found in the cytoplasm. The enzyme catalyses O-phospho-L-serine + 2-oxoglutarate = 3-phosphooxypyruvate + L-glutamate. The catalysed reaction is 4-(phosphooxy)-L-threonine + 2-oxoglutarate = (R)-3-hydroxy-2-oxo-4-phosphooxybutanoate + L-glutamate. The protein operates within amino-acid biosynthesis; L-serine biosynthesis; L-serine from 3-phospho-D-glycerate: step 2/3. It participates in cofactor biosynthesis; pyridoxine 5'-phosphate biosynthesis; pyridoxine 5'-phosphate from D-erythrose 4-phosphate: step 3/5. Functionally, catalyzes the reversible conversion of 3-phosphohydroxypyruvate to phosphoserine and of 3-hydroxy-2-oxo-4-phosphonooxybutanoate to phosphohydroxythreonine. The polypeptide is Phosphoserine aminotransferase (Syntrophobacter fumaroxidans (strain DSM 10017 / MPOB)).